The sequence spans 213 residues: ATP synthase peripheral stalk subunit OSCP, mitochondrial (213 aa).

A mitochondrion-targeting transit peptide spans 1–23; sequence MAAPAVSGLSRQVRYFSTSVVRP. The SIFI-degron motif lies at 5–23; it reads AVSGLSRQVRYFSTSVVRP. An N6-acetyllysine mark is found at Lys-54, Lys-60, Lys-70, and Lys-73. Lys-90 bears the N6-succinyllysine mark. Lys-158 and Lys-162 each carry N6-acetyllysine; alternate. N6-succinyllysine; alternate is present on residues Lys-158 and Lys-162. Lys-172, Lys-176, and Lys-192 each carry N6-acetyllysine. Position 199 is an N6-succinyllysine (Lys-199).

Belongs to the ATPase delta chain family. As to quaternary structure, component of the ATP synthase complex composed at least of ATP5F1A/subunit alpha, ATP5F1B/subunit beta, ATP5MC1/subunit c (homooctomer), MT-ATP6/subunit a, MT-ATP8/subunit 8, ATP5ME/subunit e, ATP5MF/subunit f, ATP5MG/subunit g, ATP5MK/subunit k, ATP5MJ/subunit j, ATP5F1C/subunit gamma, ATP5F1D/subunit delta, ATP5F1E/subunit epsilon, ATP5PF/subunit F6, ATP5PB/subunit b, ATP5PD/subunit d, ATP5PO/subunit OSCP. ATP synthase complex consists of a soluble F(1) head domain (subunits alpha(3) and beta(3)) - the catalytic core - and a membrane F(0) domain - the membrane proton channel (subunits c, a, 8, e, f, g, k and j). These two domains are linked by a central stalk (subunits gamma, delta, and epsilon) rotating inside the F1 region and a stationary peripheral stalk (subunits F6, b, d, and OSCP). Acetylation at Lys-162 decreases ATP production. Deacetylated by SIRT3. Post-translationally, in response to mitochondrial stress, the precursor protein is ubiquitinated by the SIFI complex in the cytoplasm before mitochondrial import, leading to its degradation. Within the SIFI complex, UBR4 initiates ubiquitin chain that are further elongated or branched by KCMF1.

Its subcellular location is the mitochondrion. The protein resides in the mitochondrion inner membrane. Functionally, subunit OSCP, of the mitochondrial membrane ATP synthase complex (F(1)F(0) ATP synthase or Complex V) that produces ATP from ADP in the presence of a proton gradient across the membrane which is generated by electron transport complexes of the respiratory chain. ATP synthase complex consist of a soluble F(1) head domain - the catalytic core - and a membrane F(1) domain - the membrane proton channel. These two domains are linked by a central stalk rotating inside the F(1) region and a stationary peripheral stalk. During catalysis, ATP synthesis in the catalytic domain of F(1) is coupled via a rotary mechanism of the central stalk subunits to proton translocation. In vivo, can only synthesize ATP although its ATP hydrolase activity can be activated artificially in vitro. Part of the complex F(0) domain. Part of the complex F(0) domain and the peripheric stalk, which acts as a stator to hold the catalytic alpha(3)beta(3) subcomplex and subunit a/ATP6 static relative to the rotary elements. The chain is ATP synthase peripheral stalk subunit OSCP, mitochondrial from Plecturocebus moloch (Dusky titi monkey).